A 364-amino-acid chain; its full sequence is DNA polymerase IV (364 aa).

Positions 7-187 constitute a UmuC domain; it reads IIHVDMDAFY…LPVNRVPGVG (181 aa). The Mg(2+) site is built by Asp-11 and Asp-105. The active site involves Glu-106.

This sequence belongs to the DNA polymerase type-Y family. In terms of assembly, monomer. Requires Mg(2+) as cofactor.

It is found in the cytoplasm. The catalysed reaction is DNA(n) + a 2'-deoxyribonucleoside 5'-triphosphate = DNA(n+1) + diphosphate. Functionally, poorly processive, error-prone DNA polymerase involved in untargeted mutagenesis. Copies undamaged DNA at stalled replication forks, which arise in vivo from mismatched or misaligned primer ends. These misaligned primers can be extended by PolIV. Exhibits no 3'-5' exonuclease (proofreading) activity. May be involved in translesional synthesis, in conjunction with the beta clamp from PolIII. The sequence is that of DNA polymerase IV from Stenotrophomonas maltophilia (strain K279a).